The following is a 518-amino-acid chain: ATP synthase subunit alpha (518 aa).

169 to 176 (GDRQTGKT) is a binding site for ATP.

It belongs to the ATPase alpha/beta chains family. In terms of assembly, F-type ATPases have 2 components, CF(1) - the catalytic core - and CF(0) - the membrane proton channel. CF(1) has five subunits: alpha(3), beta(3), gamma(1), delta(1), epsilon(1). CF(0) has three main subunits: a(1), b(2) and c(9-12). The alpha and beta chains form an alternating ring which encloses part of the gamma chain. CF(1) is attached to CF(0) by a central stalk formed by the gamma and epsilon chains, while a peripheral stalk is formed by the delta and b chains.

It is found in the cell membrane. It carries out the reaction ATP + H2O + 4 H(+)(in) = ADP + phosphate + 5 H(+)(out). Functionally, produces ATP from ADP in the presence of a proton gradient across the membrane. The alpha chain is a regulatory subunit. The polypeptide is ATP synthase subunit alpha (Mycoplasma genitalium (strain ATCC 33530 / DSM 19775 / NCTC 10195 / G37) (Mycoplasmoides genitalium)).